We begin with the raw amino-acid sequence, 140 residues long: Small ribosomal subunit protein uS9A (140 aa).

This sequence belongs to the universal ribosomal protein uS9 family. As to quaternary structure, component of the small ribosomal subunit (SSU). Mature yeast ribosomes consist of a small (40S) and a large (60S) subunit. The 40S small subunit contains 1 molecule of ribosomal RNA (18S rRNA) and at least 33 different proteins. The large 60S subunit contains 3 rRNA molecules (25S, 5.8S and 5S rRNA) and at least 46 different proteins.

It localises to the cytoplasm. Component of the ribosome, a large ribonucleoprotein complex responsible for the synthesis of proteins in the cell. The small ribosomal subunit (SSU) binds messenger RNAs (mRNAs) and translates the encoded message by selecting cognate aminoacyl-transfer RNA (tRNA) molecules. The large subunit (LSU) contains the ribosomal catalytic site termed the peptidyl transferase center (PTC), which catalyzes the formation of peptide bonds, thereby polymerizing the amino acids delivered by tRNAs into a polypeptide chain. The nascent polypeptides leave the ribosome through a tunnel in the LSU and interact with protein factors that function in enzymatic processing, targeting, and the membrane insertion of nascent chains at the exit of the ribosomal tunnel. The sequence is that of Small ribosomal subunit protein uS9A (rps1601) from Schizosaccharomyces pombe (strain 972 / ATCC 24843) (Fission yeast).